Reading from the N-terminus, the 180-residue chain is MAREVVDAMTMRRALTRITYEIIEQNKGVGNLVFIGIKTRGIFLAQRLAQRLKQLEGVDVPVGSLDITLYRDDHHAVDVAGQAKLNGADIPVDINGKHVILVDDVLFTGRTVRAALDALMDHGRPAKISLAVLVDRGHRELPIRPDFIGKNIPTALDEQVSVALEEHDGHDGISIEKLEE.

Residues 39–40 (TR), 103–111 (DDVLFTGRT), arginine 136, and valine 160 each bind substrate. Positions 99-111 (VILVDDVLFTGRT) match the PRPP-binding motif.

Belongs to the purine/pyrimidine phosphoribosyltransferase family. PyrR subfamily. As to quaternary structure, homodimer and homohexamer; in equilibrium.

It catalyses the reaction UMP + diphosphate = 5-phospho-alpha-D-ribose 1-diphosphate + uracil. Its function is as follows. Regulates transcriptional attenuation of the pyrimidine nucleotide (pyr) operon by binding in a uridine-dependent manner to specific sites on pyr mRNA. This disrupts an antiterminator hairpin in the RNA and favors formation of a downstream transcription terminator, leading to a reduced expression of downstream genes. Functionally, also displays a weak uracil phosphoribosyltransferase activity which is not physiologically significant. This Lactiplantibacillus plantarum (strain ATCC BAA-793 / NCIMB 8826 / WCFS1) (Lactobacillus plantarum) protein is Bifunctional protein PyrR 1 (pyrR1).